The primary structure comprises 533 residues: Probable protein kinase UbiB (533 aa).

A helical transmembrane segment spans residues 24 to 44 (LILELPMLPWWLRLLGATLPW). Residues 126-494 (RFEREPLASA…WKGSRHDWLG (369 aa)) enclose the Protein kinase domain. ATP-binding positions include 132–140 (LASASVAQV) and lysine 154. The Proton acceptor role is filled by aspartate 289. Residues 510 to 530 (LGQQLEAWPAWVMLAGGVFLI) traverse the membrane as a helical segment.

Belongs to the ABC1 family. UbiB subfamily.

Its subcellular location is the cell inner membrane. Its pathway is cofactor biosynthesis; ubiquinone biosynthesis [regulation]. Its function is as follows. Is probably a protein kinase regulator of UbiI activity which is involved in aerobic coenzyme Q (ubiquinone) biosynthesis. The protein is Probable protein kinase UbiB of Pseudomonas aeruginosa (strain LESB58).